We begin with the raw amino-acid sequence, 389 residues long: NADH-quinone oxidoreductase subunit D (389 aa).

Belongs to the complex I 49 kDa subunit family. NDH-1 is composed of 14 different subunits. Subunits NuoB, C, D, E, F, and G constitute the peripheral sector of the complex.

The protein resides in the cell inner membrane. The enzyme catalyses a quinone + NADH + 5 H(+)(in) = a quinol + NAD(+) + 4 H(+)(out). Its function is as follows. NDH-1 shuttles electrons from NADH, via FMN and iron-sulfur (Fe-S) centers, to quinones in the respiratory chain. The immediate electron acceptor for the enzyme in this species is believed to be ubiquinone. Couples the redox reaction to proton translocation (for every two electrons transferred, four hydrogen ions are translocated across the cytoplasmic membrane), and thus conserves the redox energy in a proton gradient. This chain is NADH-quinone oxidoreductase subunit D, found in Rickettsia prowazekii (strain Madrid E).